The primary structure comprises 642 residues: Threonine--tRNA ligase (642 aa).

Residues 1–61 (MPVITLPDGS…DTDSELSIIT (61 aa)) form the TGS domain. The catalytic stretch occupies residues 243–534 (DHRKIGKQLD…LIEEYAGKFP (292 aa)). Residues cysteine 334, histidine 385, and histidine 511 each contribute to the Zn(2+) site.

Belongs to the class-II aminoacyl-tRNA synthetase family. In terms of assembly, homodimer. Zn(2+) serves as cofactor.

The protein localises to the cytoplasm. It catalyses the reaction tRNA(Thr) + L-threonine + ATP = L-threonyl-tRNA(Thr) + AMP + diphosphate + H(+). Its function is as follows. Catalyzes the attachment of threonine to tRNA(Thr) in a two-step reaction: L-threonine is first activated by ATP to form Thr-AMP and then transferred to the acceptor end of tRNA(Thr). Also edits incorrectly charged L-seryl-tRNA(Thr). The polypeptide is Threonine--tRNA ligase (Shewanella piezotolerans (strain WP3 / JCM 13877)).